The sequence spans 116 residues: Cyclin-dependent protein kinase inhibitor SMR9 (116 aa).

Residues methionine 1–phenylalanine 22 show a composition bias toward basic residues. Positions methionine 1–threonine 62 are disordered. Positions valine 35–alanine 56 are enriched in low complexity.

In terms of biological role, probable cyclin-dependent protein kinase (CDK) inhibitor that functions as a repressor of mitosis in the endoreduplication cell cycle. This chain is Cyclin-dependent protein kinase inhibitor SMR9, found in Arabidopsis thaliana (Mouse-ear cress).